Reading from the N-terminus, the 490-residue chain is Glutamate--tRNA ligase (490 aa).

Positions 10-20 (PSPTGRMHVGN) match the 'HIGH' region motif. 4 residues coordinate Zn(2+): cysteine 109, cysteine 111, cysteine 140, and histidine 142. Residues 257–261 (KLSKR) carry the 'KMSKS' region motif. Lysine 260 provides a ligand contact to ATP.

This sequence belongs to the class-I aminoacyl-tRNA synthetase family. Glutamate--tRNA ligase type 1 subfamily. In terms of assembly, monomer. Zn(2+) is required as a cofactor.

It is found in the cytoplasm. It carries out the reaction tRNA(Glu) + L-glutamate + ATP = L-glutamyl-tRNA(Glu) + AMP + diphosphate. Catalyzes the attachment of glutamate to tRNA(Glu) in a two-step reaction: glutamate is first activated by ATP to form Glu-AMP and then transferred to the acceptor end of tRNA(Glu). The sequence is that of Glutamate--tRNA ligase from Lachnoclostridium phytofermentans (strain ATCC 700394 / DSM 18823 / ISDg) (Clostridium phytofermentans).